The following is a 112-amino-acid chain: Flowering-promoting factor 1-like protein 2 (112 aa).

The protein belongs to the FPF1 family. In terms of tissue distribution, expressed in leaves and in some parts of the flowers, mainly in the sepals.

Modulates the competence to flowering of apical meristems. This Arabidopsis thaliana (Mouse-ear cress) protein is Flowering-promoting factor 1-like protein 2 (FLP2).